The primary structure comprises 417 residues: COP9 signalosome complex subunit 7a (417 aa).

The PCI domain maps to 2 to 179 (EQTKALNALE…EMVQINSVAA (178 aa)). The disordered stretch occupies residues 240 to 417 (DEQKGAVPSS…KRGSKRKLTA (178 aa)). A compositionally biased stretch (gly residues) spans 263-290 (RGGGGGGDGAGAGGSFRGSGYSRGGGLS). Composition is skewed to low complexity over residues 291-311 (QGYR…SRQQ), 320-330 (SNQSGTNSLLT), and 343-352 (PSAVSPSAAA). Gly residues predominate over residues 367 to 379 (METGSGSGSGPLG). Acidic residues predominate over residues 385-405 (DMDDSEEDIDDDTMDLDDEGD).

It belongs to the CSN7/EIF3M family. CSN7 subfamily. In terms of assembly, component of the COP9 signalosome (CSN) complex.

The protein localises to the cytoplasm. Its subcellular location is the nucleus. Its function is as follows. Component of the COP9 signalosome (CSN) complex that acts as an regulator of the ubiquitin (Ubl) conjugation pathway by mediating the deneddylation of the cullin subunit of SCF-type E3 ubiquitin-protein ligase complexes. The CSN complex is involved in the regulation of the circadian clock through its control of the stability of the SCF(FWD1) complex. The polypeptide is COP9 signalosome complex subunit 7a (csn-7a) (Neurospora crassa (strain ATCC 24698 / 74-OR23-1A / CBS 708.71 / DSM 1257 / FGSC 987)).